The sequence spans 394 residues: Elongation factor Tu-A (394 aa).

Residues 10-204 (KPHVNVGTIG…HLDTYIPEPQ (195 aa)) form the tr-type G domain. Residues 19–26 (GHVDHGKT) form a G1 region. 19 to 26 (GHVDHGKT) is a binding site for GTP. Mg(2+) is bound at residue threonine 26. Residues 60–64 (GITIN) are G2. The G3 stretch occupies residues 81–84 (DCPG). GTP is bound by residues 81-85 (DCPGH) and 136-139 (NKCD). A G4 region spans residues 136–139 (NKCD). The tract at residues 174-176 (SAL) is G5.

This sequence belongs to the TRAFAC class translation factor GTPase superfamily. Classic translation factor GTPase family. EF-Tu/EF-1A subfamily. Monomer.

The protein resides in the cytoplasm. It carries out the reaction GTP + H2O = GDP + phosphate + H(+). Its function is as follows. GTP hydrolase that promotes the GTP-dependent binding of aminoacyl-tRNA to the A-site of ribosomes during protein biosynthesis. This is Elongation factor Tu-A from Pasteurella multocida (strain Pm70).